A 157-amino-acid polypeptide reads, in one-letter code: WPP domain-containing protein 3 (157 aa).

A compositionally biased stretch (polar residues) spans Met-1–Glu-20. Positions Met-1–Thr-41 are disordered. The segment covering His-32 to Thr-41 has biased composition (basic and acidic residues). The segment at Thr-37 to Ala-138 is WPP; degenerate.

In terms of tissue distribution, expressed in roots, stems and leaves.

It is found in the cytoplasm. Its subcellular location is the nucleus. Its function is as follows. Regulates the mitotic activity in roots. This is WPP domain-containing protein 3 (WPP3) from Arabidopsis thaliana (Mouse-ear cress).